The following is a 319-amino-acid chain: ATP-dependent 6-phosphofructokinase (319 aa).

Position 11 (glycine 11) interacts with ATP. Arginine 21–arginine 25 is a binding site for ADP. Residues arginine 72 to cysteine 73 and glycine 102 to serine 105 contribute to the ATP site. Aspartate 103 provides a ligand contact to Mg(2+). Threonine 125–aspartate 127 contributes to the substrate binding site. The active-site Proton acceptor is the aspartate 127. Arginine 154 is a binding site for ADP. Substrate contacts are provided by residues arginine 162 and methionine 169–arginine 171. ADP contacts are provided by residues glycine 185–glutamate 187, arginine 211, and lysine 213–histidine 215. Substrate-binding positions include glutamate 222, arginine 243, and histidine 249–arginine 252.

This sequence belongs to the phosphofructokinase type A (PFKA) family. ATP-dependent PFK group I subfamily. Prokaryotic clade 'B1' sub-subfamily. Homotetramer. Requires Mg(2+) as cofactor.

The protein resides in the cytoplasm. The catalysed reaction is beta-D-fructose 6-phosphate + ATP = beta-D-fructose 1,6-bisphosphate + ADP + H(+). Its pathway is carbohydrate degradation; glycolysis; D-glyceraldehyde 3-phosphate and glycerone phosphate from D-glucose: step 3/4. Its activity is regulated as follows. Allosterically activated by ADP and other diphosphonucleosides, and allosterically inhibited by phosphoenolpyruvate. Catalyzes the phosphorylation of D-fructose 6-phosphate to fructose 1,6-bisphosphate by ATP, the first committing step of glycolysis. This is ATP-dependent 6-phosphofructokinase from Anoxybacillus flavithermus (strain DSM 21510 / WK1).